Consider the following 118-residue polypeptide: Diacylglycerol kinase (118 aa).

E28 is an a divalent metal cation binding site. A run of 2 helical transmembrane segments spans residues T29–G49 and I55–V75. E69 functions as the Proton acceptor in the catalytic mechanism. A divalent metal cation is bound at residue E76. The chain crosses the membrane as a helical span at residues S98 to F118.

Belongs to the bacterial diacylglycerol kinase family. The cofactor is Mg(2+).

The protein localises to the cell inner membrane. The enzyme catalyses a 1,2-diacyl-sn-glycerol + ATP = a 1,2-diacyl-sn-glycero-3-phosphate + ADP + H(+). Functionally, catalyzes the ATP-dependent phosphorylation of sn-l,2-diacylglycerol (DAG) to phosphatidic acid. Involved in the recycling of diacylglycerol produced as a by-product during membrane-derived oligosaccharide (MDO) biosynthesis. This chain is Diacylglycerol kinase (dgkA), found in Haemophilus influenzae (strain ATCC 51907 / DSM 11121 / KW20 / Rd).